Here is a 159-residue protein sequence, read N- to C-terminus: Phosphopantetheine adenylyltransferase (159 aa).

T10 lines the substrate pocket. ATP is bound by residues 10–11 (TF) and H18. Residues K42, L74, and R88 each coordinate substrate. Residues 89-91 (GLR), E99, and 124-130 (NSFISST) each bind ATP.

The protein belongs to the bacterial CoaD family. In terms of assembly, homohexamer. Requires Mg(2+) as cofactor.

It is found in the cytoplasm. It catalyses the reaction (R)-4'-phosphopantetheine + ATP + H(+) = 3'-dephospho-CoA + diphosphate. The protein operates within cofactor biosynthesis; coenzyme A biosynthesis; CoA from (R)-pantothenate: step 4/5. Reversibly transfers an adenylyl group from ATP to 4'-phosphopantetheine, yielding dephospho-CoA (dPCoA) and pyrophosphate. The protein is Phosphopantetheine adenylyltransferase of Shewanella halifaxensis (strain HAW-EB4).